We begin with the raw amino-acid sequence, 436 residues long: GTPase Der (436 aa).

EngA-type G domains lie at 4-167 and 175-351; these read PTVA…PTEV and IRFS…ESQN. Residues 10–17, 57–61, 119–122, 181–188, 229–233, and 294–297 contribute to the GTP site; these read GRPNVGKS, DTGGI, NKVD, DTAGM, and NKWD. The region spanning 352–436 is the KH-like domain; sequence RRISSAVLND…PIHLIARKRK (85 aa).

It belongs to the TRAFAC class TrmE-Era-EngA-EngB-Septin-like GTPase superfamily. EngA (Der) GTPase family. As to quaternary structure, associates with the 50S ribosomal subunit.

Functionally, GTPase that plays an essential role in the late steps of ribosome biogenesis. The polypeptide is GTPase Der (Streptococcus thermophilus (strain CNRZ 1066)).